Here is a 220-residue protein sequence, read N- to C-terminus: Ribose-5-phosphate isomerase A (220 aa).

Residues 28–31 (TGST), 81–84 (DGAD), and 94–97 (KGGG) each bind substrate. Glu103 (proton acceptor) is an active-site residue. Lys121 is a binding site for substrate.

The protein belongs to the ribose 5-phosphate isomerase family. As to quaternary structure, homodimer.

It carries out the reaction aldehydo-D-ribose 5-phosphate = D-ribulose 5-phosphate. It participates in carbohydrate degradation; pentose phosphate pathway; D-ribose 5-phosphate from D-ribulose 5-phosphate (non-oxidative stage): step 1/1. Functionally, catalyzes the reversible conversion of ribose-5-phosphate to ribulose 5-phosphate. This is Ribose-5-phosphate isomerase A from Coxiella burnetii (strain CbuK_Q154) (Coxiella burnetii (strain Q154)).